A 107-amino-acid chain; its full sequence is MMKVLVVVALLVTLISYSSSEGIDDLEADELLSLTANEQTRKECIPKHHECTSNKHGCCRGNFFKYKCQCTTVVTQDGEQTERCFCGTPPHHKAAELVVGFGKKILG.

Positions 1-20 (MMKVLVVVALLVTLISYSSS) are cleaved as a signal peptide. A propeptide spanning residues 21–41 (EGIDDLEADELLSLTANEQTR) is cleaved from the precursor. 4 disulfides stabilise this stretch: C44/C59, C51/C68, C58/C86, and C70/C84.

The protein belongs to the neurotoxin 19 (CSTX) family. 04 (U1-Lctx) subfamily. As to expression, expressed by the venom gland.

The protein localises to the secreted. The polypeptide is U1-lycotoxin-Ls1v (Lycosa singoriensis (Wolf spider)).